A 444-amino-acid chain; its full sequence is Tubulin beta-2 chain (444 aa).

Residues Q11, E69, S138, G142, T143, G144, N204, and N226 each coordinate GTP. Position 69 (E69) interacts with Mg(2+).

This sequence belongs to the tubulin family. Dimer of alpha and beta chains. A typical microtubule is a hollow water-filled tube with an outer diameter of 25 nm and an inner diameter of 15 nM. Alpha-beta heterodimers associate head-to-tail to form protofilaments running lengthwise along the microtubule wall with the beta-tubulin subunit facing the microtubule plus end conferring a structural polarity. Microtubules usually have 13 protofilaments but different protofilament numbers can be found in some organisms and specialized cells. It depends on Mg(2+) as a cofactor.

It localises to the cytoplasm. It is found in the cytoskeleton. In terms of biological role, tubulin is the major constituent of microtubules, a cylinder consisting of laterally associated linear protofilaments composed of alpha- and beta-tubulin heterodimers. Microtubules grow by the addition of GTP-tubulin dimers to the microtubule end, where a stabilizing cap forms. Below the cap, tubulin dimers are in GDP-bound state, owing to GTPase activity of alpha-tubulin. The polypeptide is Tubulin beta-2 chain (TUBB2) (Zea mays (Maize)).